Reading from the N-terminus, the 219-residue chain is Albonoursin synthase (219 aa).

This sequence belongs to the nitroreductase family. As to quaternary structure, homomer. FMN serves as cofactor. In terms of processing, the N-terminus is blocked.

It localises to the cytoplasm. The catalysed reaction is cyclo(L-phenylalanyl-L-leucyl) + 2 O2 = albonoursin + 2 H2O2. Involved in the biosynthesis of albonoursin (cyclo[(alpha,beta-dehydro-Phe)-(alpha,beta-dehydro-Leu)]), an antibacterial peptide. Catalyzes the formation of alpha,beta-dehydro-Phe (DPhe) and alpha,beta-dehydro-Leu (DLeu) residues during the biosynthesis of albonoursin. The catalytic reaction of cyclo(L-Phe-L-Leu) occurs in a two-step sequential alpha-beta-dehydrogenation leading first to cyclo(alpha,beta-dehydro-Phe-L-Leu) and finally to albonoursin. Can also use cyclo(L-Phe-L-His), cyclo(L-Trp-L-Trp), cyclo(L-Leu-L-Ala), cyclo(L-Phe-Gly), cyclo(L-Leu-Gly), cyclo(L-Ser-Gly) and cyclo(L-Glu-Gly) as substrate suggesting that the diketopiperazine ring is essential for the enzymatic reaction. The chain is Albonoursin synthase (albA) from Streptomyces noursei (Streptomyces albulus).